The sequence spans 420 residues: Transmembrane protease serine 11B-like protein (420 aa).

The Cytoplasmic portion of the chain corresponds to 1–19; that stretch reads MTVSKLRPVIASRKSFPPW. A helical; Signal-anchor for type II membrane protein transmembrane segment spans residues 20–40; the sequence is MIILGVLGVLAILGLIIGLLV. Over 41–420 the chain is Extracellular; sequence HFLAVENKIY…RDWIASKTGI (380 aa). The 118-residue stretch at 48–165 folds into the SEA domain; the sequence is KIYYYQGSFK…GSLKLTEITK (118 aa). Residues asparagine 111 and asparagine 146 are each glycosylated (N-linked (GlcNAc...) asparagine). The 231-residue stretch at 189–419 folds into the Peptidase S1 domain; that stretch reads ITGGSTAQKG…YRDWIASKTG (231 aa). The cysteines at positions 214 and 230 are disulfide-linked. Residue histidine 229 is the Charge relay system of the active site. The N-linked (GlcNAc...) asparagine glycan is linked to asparagine 239. The active-site Charge relay system is aspartate 274. Disulfide bonds link cysteine 339/cysteine 355 and cysteine 366/cysteine 395. Serine 370 serves as the catalytic Charge relay system.

Belongs to the peptidase S1 family.

The protein resides in the membrane. It is found in the cell membrane. Its activity is regulated as follows. Inhibited by aprotinin, leupeptin, benzamidine, SERPINA1, SPINT1 and SPINT2. In terms of biological role, serine protease. In Rattus norvegicus (Rat), this protein is Transmembrane protease serine 11B-like protein (Tmprss11bnl).